Reading from the N-terminus, the 513-residue chain is Maturase K (513 aa).

This sequence belongs to the intron maturase 2 family. MatK subfamily.

The protein localises to the plastid. The protein resides in the chloroplast. In terms of biological role, usually encoded in the trnK tRNA gene intron. Probably assists in splicing its own and other chloroplast group II introns. In Phaseolus vulgaris (Kidney bean), this protein is Maturase K.